We begin with the raw amino-acid sequence, 396 residues long: Acetate kinase (396 aa).

Asparagine 7 lines the Mg(2+) pocket. An ATP-binding site is contributed by lysine 14. Residue arginine 88 coordinates substrate. Catalysis depends on aspartate 145, which acts as the Proton donor/acceptor. ATP contacts are provided by residues 205–209 (HLGNG), 279–281 (DFR), and 327–331 (GIGEN). Residue glutamate 381 coordinates Mg(2+).

This sequence belongs to the acetokinase family. In terms of assembly, homodimer. It depends on Mg(2+) as a cofactor. Mn(2+) serves as cofactor.

The protein localises to the cytoplasm. The catalysed reaction is acetate + ATP = acetyl phosphate + ADP. It participates in metabolic intermediate biosynthesis; acetyl-CoA biosynthesis; acetyl-CoA from acetate: step 1/2. Its function is as follows. Catalyzes the formation of acetyl phosphate from acetate and ATP. Can also catalyze the reverse reaction. The protein is Acetate kinase of Campylobacter jejuni subsp. jejuni serotype O:2 (strain ATCC 700819 / NCTC 11168).